The chain runs to 178 residues: Interleukin-10 (178 aa).

The first 18 residues, 1 to 18, serve as a signal peptide directing secretion; that stretch reads MHSSALLCYLVFLAGVGA. Cystine bridges form between Cys30/Cys126 and Cys80/Cys132. Asn67 carries N-linked (GlcNAc...) asparagine glycosylation. An N-linked (GlcNAc...) asparagine glycan is attached at Asn134.

The protein belongs to the IL-10 family. Homodimer. Interacts with IL10RA and IL10RB.

The protein localises to the secreted. Major immune regulatory cytokine that acts on many cells of the immune system where it has profound anti-inflammatory functions, limiting excessive tissue disruption caused by inflammation. Mechanistically, IL10 binds to its heterotetrameric receptor comprising IL10RA and IL10RB leading to JAK1 and STAT2-mediated phosphorylation of STAT3. In turn, STAT3 translocates to the nucleus where it drives expression of anti-inflammatory mediators. Targets antigen-presenting cells (APCs) such as macrophages and monocytes and inhibits their release of pro-inflammatory cytokines including granulocyte-macrophage colony-stimulating factor /GM-CSF, granulocyte colony-stimulating factor/G-CSF, IL-1 alpha, IL-1 beta, IL-6, IL-8 and TNF-alpha. Also interferes with antigen presentation by reducing the expression of MHC-class II and co-stimulatory molecules, thereby inhibiting their ability to induce T cell activation. In addition, controls the inflammatory response of macrophages by reprogramming essential metabolic pathways including mTOR signaling. The sequence is that of Interleukin-10 (IL10) from Equus caballus (Horse).